A 183-amino-acid polypeptide reads, in one-letter code: Holliday junction branch migration complex subunit RuvA (183 aa).

The interval 1–64 (MVVGIEGIIT…EDSNKFYGFL (64 aa)) is domain I. A domain II region spans residues 65–139 (DKDEQKMFEM…DTKTKLENVS (75 aa)). Ser139 is a region of interest (flexible linker). The interval 139–183 (SDDKSEALAALLTLGFKQEKIISVLASAQATGTSELIKEALKKLG) is domain III.

This sequence belongs to the RuvA family. Homotetramer. Forms an RuvA(8)-RuvB(12)-Holliday junction (HJ) complex. HJ DNA is sandwiched between 2 RuvA tetramers; dsDNA enters through RuvA and exits via RuvB. An RuvB hexamer assembles on each DNA strand where it exits the tetramer. Each RuvB hexamer is contacted by two RuvA subunits (via domain III) on 2 adjacent RuvB subunits; this complex drives branch migration. In the full resolvosome a probable DNA-RuvA(4)-RuvB(12)-RuvC(2) complex forms which resolves the HJ.

The protein localises to the cytoplasm. The RuvA-RuvB-RuvC complex processes Holliday junction (HJ) DNA during genetic recombination and DNA repair, while the RuvA-RuvB complex plays an important role in the rescue of blocked DNA replication forks via replication fork reversal (RFR). RuvA specifically binds to HJ cruciform DNA, conferring on it an open structure. The RuvB hexamer acts as an ATP-dependent pump, pulling dsDNA into and through the RuvAB complex. HJ branch migration allows RuvC to scan DNA until it finds its consensus sequence, where it cleaves and resolves the cruciform DNA. This Campylobacter jejuni subsp. jejuni serotype O:23/36 (strain 81-176) protein is Holliday junction branch migration complex subunit RuvA.